Reading from the N-terminus, the 371-residue chain is uncharacterized protein (371 aa).

The protein to E.coli YcjY.

This is an uncharacterized protein from Pseudomonas aeruginosa (strain ATCC 15692 / DSM 22644 / CIP 104116 / JCM 14847 / LMG 12228 / 1C / PRS 101 / PAO1).